The sequence spans 240 residues: 31 kDa outer-membrane immunogenic protein (240 aa).

A signal peptide spans 1–19; it reads MKSVILASIAAMFATSAMA. The segment at 48–83 is epitope recognized by the monoclonal antibody A59/10F09/G10; that stretch reads NAGYAGGKFKHPFSSFDKEDNEQVSGSLDVTAGGFV.

This sequence belongs to the Omp25/RopB family. Oligomeric.

It localises to the cell outer membrane. In terms of biological role, major outer membrane protein associated with peptidoglycans. May function as a porin. The sequence is that of 31 kDa outer-membrane immunogenic protein (omp31) from Brucella melitensis biotype 1 (strain ATCC 23456 / CCUG 17765 / NCTC 10094 / 16M).